The primary structure comprises 117 residues: uncharacterized protein (117 aa).

The disordered stretch occupies residues 96 to 117 (RKGGASKHRTLSAETGIRGEGE).

This is an uncharacterized protein from Saccharomyces cerevisiae (strain ATCC 204508 / S288c) (Baker's yeast).